The primary structure comprises 118 residues: V-type proton ATPase subunit G 1 (118 aa).

A2 bears the N-acetylalanine mark.

This sequence belongs to the V-ATPase G subunit family. In terms of assembly, V-ATPase is a heteromultimeric enzyme made up of two complexes: the ATP-hydrolytic V1 complex and the proton translocation V0 complex. The V1 complex consists of three catalytic AB heterodimers that form a heterohexamer, three peripheral stalks each consisting of EG heterodimers, one central rotor including subunits D and F, and the regulatory subunits C and H. The proton translocation complex V0 consists of the proton transport subunit a, a ring of proteolipid subunits c9c'', rotary subunit d, subunits e and f, and the accessory subunits ATP6AP1/Ac45 and ATP6AP2/PRR. As to expression, kidney; localizes to early distal nephron, encompassing thick ascending limbs and distal convoluted tubules (at protein level). Ubiquitous.

It localises to the apical cell membrane. In terms of biological role, subunit of the V1 complex of vacuolar(H+)-ATPase (V-ATPase), a multisubunit enzyme composed of a peripheral complex (V1) that hydrolyzes ATP and a membrane integral complex (V0) that translocates protons. V-ATPase is responsible for acidifying and maintaining the pH of intracellular compartments and in some cell types, is targeted to the plasma membrane, where it is responsible for acidifying the extracellular environment. In aerobic conditions, involved in intracellular iron homeostasis, thus triggering the activity of Fe(2+) prolyl hydroxylase (PHD) enzymes, and leading to HIF1A hydroxylation and subsequent proteasomal degradation. This is V-type proton ATPase subunit G 1 (Atp6v1g1) from Mus musculus (Mouse).